Reading from the N-terminus, the 177-residue chain is Inorganic pyrophosphatase (177 aa).

Substrate-binding residues include lysine 30, arginine 44, and tyrosine 56. Positions 66, 71, and 103 each coordinate Mg(2+). Position 142 (tyrosine 142) interacts with substrate.

It belongs to the PPase family. In terms of assembly, homohexamer. Requires Mg(2+) as cofactor.

The protein localises to the cytoplasm. It carries out the reaction diphosphate + H2O = 2 phosphate + H(+). In terms of biological role, catalyzes the hydrolysis of inorganic pyrophosphate (PPi) forming two phosphate ions. This is Inorganic pyrophosphatase from Agrobacterium fabrum (strain C58 / ATCC 33970) (Agrobacterium tumefaciens (strain C58)).